The following is a 167-amino-acid chain: Endoribonuclease YbeY (167 aa).

Residues His125, His129, and His135 each contribute to the Zn(2+) site.

It belongs to the endoribonuclease YbeY family. It depends on Zn(2+) as a cofactor.

It is found in the cytoplasm. Functionally, single strand-specific metallo-endoribonuclease involved in late-stage 70S ribosome quality control and in maturation of the 3' terminus of the 16S rRNA. This Allorhizobium ampelinum (strain ATCC BAA-846 / DSM 112012 / S4) (Agrobacterium vitis (strain S4)) protein is Endoribonuclease YbeY.